The chain runs to 1024 residues: E3 ISG15--protein ligase HERC5 (1024 aa).

Positions 1–13 are enriched in basic residues; the sequence is MERRSRRKSRRNG. Positions 1–28 are disordered; it reads MERRSRRKSRRNGRSTAGKAAATQPAKS. RCC1 repeat units follow at residues 96–155, 156–208, 209–260, 262–312, and 314–364; these read NMKI…ALSK, GGEL…ALSM, SGNI…LLTQ, GLLF…AYVS, and LGKV…LIMI. The 323-residue stretch at 702–1024 folds into the HECT domain; that stretch reads ENEDLRKELW…EAINNNRGFG (323 aa). The active-site Glycyl thioester intermediate is Cys994.

In terms of assembly, (Microbial infection) Interacts with human cytomegalovirus protein UL26; this interaction inhibits global protein ISGylation. As to quaternary structure, (Microbial infection) Interacts with Kaposi's sarcoma-associated herpesvirus protein v-IRF1; this interaction inhibits global protein ISGylation. Binds to CCNA1, CCNB1, CCND1 and CCNE1. Interacts with UBE2L6. Interacts with IRF3, this interaction is marginal in resting cells but enhanced upon viral infection. Interacts with influenza A virus NS1. Post-translationally, ISGylated. Expressed in testis and to a lesser degree in brain, ovary and placenta. Found in most tissues at low levels.

The protein localises to the cytoplasm. It localises to the perinuclear region. In terms of biological role, major E3 ligase for ISG15 conjugation. Acts as a positive regulator of innate antiviral response in cells induced by interferon. Functions as part of the ISGylation machinery that recognizes target proteins in a broad and relatively non-specific manner. Catalyzes ISGylation of IRF3 which results in sustained activation, it attenuates IRF3-PIN1 interaction, which antagonizes IRF3 ubiquitination and degradation, and boosts the antiviral response. Mediates ISGylation of the phosphatase PTEN leading to its degradation, thus alleviating its suppression of the PI3K-AKT signaling pathway and promoting the production of cytokines that facilitate bacterial clearance. Interferes with the function of key viral structural proteins such as ebolavirus structural protein VP40 or HIV-1 protein GAG. Catalyzes ISGylation of influenza A viral NS1 which attenuates virulence; ISGylated NS1 fails to form homodimers and thus to interact with its RNA targets. Catalyzes ISGylation of papillomavirus type 16 L1 protein which results in dominant-negative effect on virus infectivity. Physically associated with polyribosomes, broadly modifies newly synthesized proteins in a cotranslational manner. In an interferon-stimulated cell, newly translated viral proteins are primary targets of ISG15. Promotes parkin/PRKN ubiquitin E3 ligase activity by suppressing the intramolecular interaction that maintains its autoinhibited conformation. Its function is as follows. (Microbial infection) Functions as an E3 ligase for ISGylation of hepatitis B virus protein X leading to enhanced viral replication due to increased interferon resistance. The sequence is that of E3 ISG15--protein ligase HERC5 (HERC5) from Homo sapiens (Human).